Here is a 326-residue protein sequence, read N- to C-terminus: ELMO domain-containing protein 1 (326 aa).

In terms of domain architecture, ELMO spans 133 to 306 (QHEEMLLKLW…KFRKRIIKQL (174 aa)).

In terms of biological role, acts as a GTPase-activating protein (GAP) toward guanine nucleotide exchange factors like ARL2, ARL3, ARF1 and ARF6, but not for GTPases outside the Arf family. The chain is ELMO domain-containing protein 1 (ELMOD1) from Bos taurus (Bovine).